The primary structure comprises 601 residues: Glutathione-regulated potassium-efflux system protein KefB (601 aa).

13 helical membrane-spanning segments follow: residues 4-24, 29-49, 55-75, 87-107, 111-131, 152-172, 177-197, 207-227, 230-250, 262-282, 284-304, 324-344, and 356-376; these read ADLL…VPLA, IGAV…GLGF, EILH…GLEL, IFGV…GLLM, FLWQ…TAMA, VLLF…LLAG, HFDW…LIGG, FIAA…LVLS, LFMD…GVLL, AIDP…GMSL, LGVL…LVVI, MQFA…FSTA, and ALLL…MKGI. Residues 400-519 form the RCK N-terminal domain; sequence KPQVIVVGFG…AGVTQFSRET (120 aa).

This sequence belongs to the monovalent cation:proton antiporter 2 (CPA2) transporter (TC 2.A.37) family. KefB subfamily. As to quaternary structure, interacts with the regulatory subunit KefG.

It is found in the cell inner membrane. Its function is as follows. Pore-forming subunit of a potassium efflux system that confers protection against electrophiles. Catalyzes K(+)/H(+) antiport. The chain is Glutathione-regulated potassium-efflux system protein KefB from Salmonella paratyphi A (strain ATCC 9150 / SARB42).